The sequence spans 605 residues: Formin-binding protein 1-like (605 aa).

The F-BAR domain occupies 1 to 263 (MSWGTELWDQ…AAKSVDERRD (263 aa)). A coiled-coil region spans residues 66-258 (FTSCIAFFNI…EGMILAAKSV (193 aa)). Positions 245–535 (SKCLEGMILA…EFDDEFEDDD (291 aa)) are interaction with CDC42. At serine 295 the chain carries Phosphoserine. Residues 325 to 345 (FGKKPKPQSPPLTPTSLFTSS) are disordered. The stretch at 392-484 (LEDFSHLPPE…VEGKTGVRGD (93 aa)) forms a coiled coil. An REM-1 domain is found at 397–474 (HLPPEQRRKK…IHKNEAWLSE (78 aa)). The span at 480-490 (GVRGDRRHSSD) shows a compositional bias: basic and acidic residues. The disordered stretch occupies residues 480–539 (GVRGDRRHSSDINHLVTQGRESPEGSYTDDANQEVRGPPQQHGHHSEFDDEFEDDDPLPA). Residues serine 488, serine 501, and serine 505 each carry the phosphoserine modification. An interaction with DNM1 region spans residues 522 to 605 (GHHSEFDDEF…VTLEKNSKGS (84 aa)). The segment covering 527-536 (FDDEFEDDDP) has biased composition (acidic residues). One can recognise an SH3 domain in the interval 538-599 (PAIGHCKAIY…PTTYIDVTLE (62 aa)). The interaction with DNM2 and WASL stretch occupies residues 541–597 (GHCKAIYPFDGHNEGTLAMKEGEVLYIIEEDKGDGWTRARRQNGEEGYVPTTYIDVT). Residues 541–605 (GHCKAIYPFD…VTLEKNSKGS (65 aa)) are interaction with DAAM1, DIAPH1 and DIAPH2.

This sequence belongs to the FNBP1 family. Homodimerizes, the dimers can polymerize end-to-end to form filamentous structures. Interacts with GTP-bound CDC42. Interacts with DAAM1, DIAPH1, DIAPH2, DNM1, DNM2 and WASL/N-WASP. Interacts with ATG3. Interacts (via SH3 domain) with ABI1, WASF2, CDC42 and WIPF1. In terms of tissue distribution, isoform 1 is expressed in brain. Isoform 2 is expressed in brain, kidney and lung. Within the brain expression is seen in cortical neurons, hippocampal pyramidal neurons, hypothalamus and piriform cortex.

Its subcellular location is the cytoplasm. It is found in the cytoskeleton. The protein localises to the cell cortex. It localises to the cytoplasmic vesicle. The protein resides in the cell membrane. In terms of biological role, required to coordinate membrane tubulation with reorganization of the actin cytoskeleton during endocytosis. May bind to lipids such as phosphatidylinositol 4,5-bisphosphate and phosphatidylserine and promote membrane invagination and the formation of tubules. Also promotes CDC42-induced actin polymerization by activating the WASL-WASPIP complex, the predominant form of WASL/N-WASP in cells. Actin polymerization may promote the fission of membrane tubules to form endocytic vesicles. Essential for autophagy of intracellular bacterial pathogens. May negatively regulate neurite extension and axon branching in developing neurons. This Rattus norvegicus (Rat) protein is Formin-binding protein 1-like (Fnbp1l).